The chain runs to 162 residues: MNSRKLFSKLKEESYDVSIFDLMNAKVYLEKDMTYLPEDYKKGYLEDFFTFFPEVLREIKNKTEEEIEDFEIDEEEIKKVDLRLCSMGSKKMGRNSYEKLVKTVINYLIFINKRPLHALTTRFPGGKQIIEKNGNYYCPIKNAQSNELSICEFCICKDLNEL.

It belongs to the UPF0305 family.

This chain is UPF0305 protein MmarC7_1691, found in Methanococcus maripaludis (strain C7 / ATCC BAA-1331).